The primary structure comprises 501 residues: Glycerol kinase (501 aa).

Thr11 is a binding site for ADP. ATP contacts are provided by Thr11, Thr12, and Ser13. Thr11 is a sn-glycerol 3-phosphate binding site. Arg15 serves as a coordination point for ADP. Residues Arg81, Glu82, Tyr133, and Asp242 each coordinate sn-glycerol 3-phosphate. Arg81, Glu82, Tyr133, Asp242, and Gln243 together coordinate glycerol. ADP contacts are provided by Thr264 and Gly307. Thr264, Gly307, Gln311, and Gly409 together coordinate ATP. Gly409 and Asn413 together coordinate ADP.

It belongs to the FGGY kinase family.

It catalyses the reaction glycerol + ATP = sn-glycerol 3-phosphate + ADP + H(+). Its pathway is polyol metabolism; glycerol degradation via glycerol kinase pathway; sn-glycerol 3-phosphate from glycerol: step 1/1. Inhibited by fructose 1,6-bisphosphate (FBP). Its function is as follows. Key enzyme in the regulation of glycerol uptake and metabolism. Catalyzes the phosphorylation of glycerol to yield sn-glycerol 3-phosphate. The polypeptide is Glycerol kinase (Borreliella afzelii (strain PKo) (Borrelia afzelii)).